We begin with the raw amino-acid sequence, 299 residues long: ATP phosphoribosyltransferase (299 aa).

Belongs to the ATP phosphoribosyltransferase family. Long subfamily. As to quaternary structure, equilibrium between an active dimeric form, an inactive hexameric form and higher aggregates. Interconversion between the various forms is largely reversible and is influenced by the natural substrates and inhibitors of the enzyme. Mg(2+) serves as cofactor.

It localises to the cytoplasm. The enzyme catalyses 1-(5-phospho-beta-D-ribosyl)-ATP + diphosphate = 5-phospho-alpha-D-ribose 1-diphosphate + ATP. Its pathway is amino-acid biosynthesis; L-histidine biosynthesis; L-histidine from 5-phospho-alpha-D-ribose 1-diphosphate: step 1/9. Its activity is regulated as follows. Feedback inhibited by histidine. In terms of biological role, catalyzes the condensation of ATP and 5-phosphoribose 1-diphosphate to form N'-(5'-phosphoribosyl)-ATP (PR-ATP). Has a crucial role in the pathway because the rate of histidine biosynthesis seems to be controlled primarily by regulation of HisG enzymatic activity. The sequence is that of ATP phosphoribosyltransferase from Blochmanniella floridana.